A 106-amino-acid polypeptide reads, in one-letter code: uncharacterized protein (106 aa).

Residues 1-31 (MKKKTKIILSLLAALIVILIVLPVLSPVVFT) form the signal peptide.

This is an uncharacterized protein from Bacillus subtilis (strain 168).